Consider the following 190-residue polypeptide: Lipid A acyltransferase PagP (190 aa).

Positions 1-18 (MKRLISCLTIICALNASA) are cleaved as a signal peptide. Active-site residues include His60, Asp103, and Ser104.

Belongs to the lipid A palmitoyltransferase family. In terms of assembly, homodimer.

The protein resides in the cell outer membrane. It catalyses the reaction a lipid A + a 1,2-diacyl-sn-glycero-3-phosphocholine = a hepta-acyl lipid A + a 2-acyl-sn-glycero-3-phosphocholine. The enzyme catalyses a lipid IVA + a 1,2-diacyl-sn-glycero-3-phosphocholine = a lipid IVB + a 2-acyl-sn-glycero-3-phosphocholine. The catalysed reaction is a lipid IIA + a 1,2-diacyl-sn-glycero-3-phosphocholine = a lipid IIB + a 2-acyl-sn-glycero-3-phosphocholine. Its function is as follows. Transfers a fatty acid residue from the sn-1 position of a phospholipid to the N-linked hydroxyfatty acid chain on the proximal unit of lipid A or its precursors. This chain is Lipid A acyltransferase PagP, found in Legionella pneumophila (strain Corby).